Here is a 623-residue protein sequence, read N- to C-terminus: Leucine aminopeptidase 2 (623 aa).

Residues 136 to 138 (QCQ) and 273 to 278 (PYGGME) contribute to the a peptide site. H302 contacts Zn(2+). The active-site Proton acceptor is E303. Zn(2+) is bound by residues H306 and E325. Y390 functions as the Proton donor in the catalytic mechanism.

It belongs to the peptidase M1 family. The cofactor is Zn(2+).

The protein localises to the cytoplasm. Its subcellular location is the nucleus. The enzyme catalyses an epoxide + H2O = an ethanediol. Functionally, aminopeptidase that preferentially cleaves di- and tripeptides. Also has low epoxide hydrolase activity (in vitro). Can hydrolyze the epoxide leukotriene LTA(4) but it forms preferentially 5,6-dihydroxy-7,9,11,14-eicosatetraenoic acid rather than the cytokine leukotriene B(4) as the product compared to the homologous mammalian enzyme (in vitro). This is Leucine aminopeptidase 2 from Phaeosphaeria nodorum (strain SN15 / ATCC MYA-4574 / FGSC 10173) (Glume blotch fungus).